The following is a 165-amino-acid chain: Large ribosomal subunit protein eL15 (165 aa).

Positions 126-147 are disordered; sequence TSAGRKSRGLGKGHKFHHTIGG. Residues 130-143 are compositionally biased toward basic residues; it reads RKSRGLGKGHKFHH.

The protein belongs to the eukaryotic ribosomal protein eL15 family. As to quaternary structure, component of the large ribosomal subunit.

The protein resides in the cytoplasm. Functionally, component of the large ribosomal subunit. The ribosome is a large ribonucleoprotein complex responsible for the synthesis of proteins in the cell. The chain is Large ribosomal subunit protein eL15 (RPL15) from Gallus gallus (Chicken).